A 391-amino-acid chain; its full sequence is Succinate--CoA ligase [ADP-forming] subunit beta (391 aa).

Residues lysine 9–glutamate 247 enclose the ATP-grasp domain. ATP is bound by residues lysine 49, glycine 56 to glycine 58, glutamate 102, alanine 105, and glutamate 110. Mg(2+) contacts are provided by asparagine 202 and aspartate 216. Substrate contacts are provided by residues asparagine 267 and glycine 324 to leucine 326.

The protein belongs to the succinate/malate CoA ligase beta subunit family. As to quaternary structure, heterotetramer of two alpha and two beta subunits. Mg(2+) is required as a cofactor.

The catalysed reaction is succinate + ATP + CoA = succinyl-CoA + ADP + phosphate. It carries out the reaction GTP + succinate + CoA = succinyl-CoA + GDP + phosphate. The protein operates within carbohydrate metabolism; tricarboxylic acid cycle; succinate from succinyl-CoA (ligase route): step 1/1. In terms of biological role, succinyl-CoA synthetase functions in the citric acid cycle (TCA), coupling the hydrolysis of succinyl-CoA to the synthesis of either ATP or GTP and thus represents the only step of substrate-level phosphorylation in the TCA. The beta subunit provides nucleotide specificity of the enzyme and binds the substrate succinate, while the binding sites for coenzyme A and phosphate are found in the alpha subunit. The protein is Succinate--CoA ligase [ADP-forming] subunit beta of Acidobacterium capsulatum (strain ATCC 51196 / DSM 11244 / BCRC 80197 / JCM 7670 / NBRC 15755 / NCIMB 13165 / 161).